The following is a 724-amino-acid chain: Probable metal-nicotianamine transporter YSL13 (724 aa).

The segment at 1–54 (MATVPTPSEAHGGATPTAADVEMVEASELRRRGKPSGDRATGPSRDGAAAAAEE) is disordered. A run of 14 helical transmembrane segments spans residues 80–100 (AFVV…KLNL), 103–123 (GIIP…VRLW), 148–168 (CVVA…ILSM), 190–210 (LGWI…GLVP), 252–272 (LGIF…YTAT), 310–330 (IVNV…WPLI), 355–375 (VFIA…KMII), 423–443 (IPWY…IGTV), 455–475 (ILVA…GTGL), 487–507 (LAIF…LAGL), 541–561 (FVSQ…VFWL), 603–623 (LNLC…RDLV), 640–660 (FYIG…LFVW), and 675–695 (VASG…VLAL).

The protein belongs to the YSL (TC 2.A.67.2) family. Expressed in leaves and at low levels in root cortex.

The protein resides in the membrane. Functionally, may be involved in the transport of nicotianamine-chelated metals. This is Probable metal-nicotianamine transporter YSL13 (YSL13) from Oryza sativa subsp. japonica (Rice).